The sequence spans 102 residues: MVRRSKGFRSRTRKKLRKKPRERGLSPLGPMTQEFEEGQKVHIVIDPSVHKGMPHPRYHGRTGEVVGRQGRAYIVKIRDGGKEKKLIVYPEHLKPQEQPELQ.

A compositionally biased stretch (basic residues) spans 1–21; sequence MVRRSKGFRSRTRKKLRKKPR. A disordered region spans residues 1–33; sequence MVRRSKGFRSRTRKKLRKKPRERGLSPLGPMTQ.

The protein belongs to the eukaryotic ribosomal protein eL21 family.

The protein is Large ribosomal subunit protein eL21 of Methanopyrus kandleri (strain AV19 / DSM 6324 / JCM 9639 / NBRC 100938).